The sequence spans 76 residues: Small ribosomal subunit protein bS18 (76 aa).

Belongs to the bacterial ribosomal protein bS18 family. Part of the 30S ribosomal subunit. Forms a tight heterodimer with protein bS6.

Its function is as follows. Binds as a heterodimer with protein bS6 to the central domain of the 16S rRNA, where it helps stabilize the platform of the 30S subunit. In Xanthomonas campestris pv. campestris (strain 8004), this protein is Small ribosomal subunit protein bS18.